The chain runs to 453 residues: tRNA modification GTPase MnmE (453 aa).

3 residues coordinate (6S)-5-formyl-5,6,7,8-tetrahydrofolate: Arg22, Glu79, and Lys119. Residues 215 to 376 (GMKVVIAGRP…LRNHLKECMG (162 aa)) enclose the TrmE-type G domain. Asn225 is a K(+) binding site. Residues 225-230 (NAGKSS), 244-250 (TDIAGTT), 269-272 (DTAG), and 334-337 (NKAD) contribute to the GTP site. Ser229 contributes to the Mg(2+) binding site. Positions 244, 246, and 249 each coordinate K(+). Position 250 (Thr250) interacts with Mg(2+). Position 453 (Lys453) interacts with (6S)-5-formyl-5,6,7,8-tetrahydrofolate.

This sequence belongs to the TRAFAC class TrmE-Era-EngA-EngB-Septin-like GTPase superfamily. TrmE GTPase family. As to quaternary structure, homodimer. Heterotetramer of two MnmE and two MnmG subunits. K(+) serves as cofactor.

The protein localises to the cytoplasm. Exhibits a very high intrinsic GTPase hydrolysis rate. Involved in the addition of a carboxymethylaminomethyl (cmnm) group at the wobble position (U34) of certain tRNAs, forming tRNA-cmnm(5)s(2)U34. This is tRNA modification GTPase MnmE from Vibrio parahaemolyticus serotype O3:K6 (strain RIMD 2210633).